The primary structure comprises 216 residues: MRLLHLDSSILTDTSVSRQLTAQVVQDLHAAIDDLHATYRDLAAVPIAHLSGAIAAGFRPLPQPASDAALVAEHALSEQLVDEFLASDIVVIGAPMYNFSVPTQLKAWIDRIAQPGRTFRYTANGPEGLAGGKQLIVASSRGGMYTQGPMASLDFQEAYLTATFGFLGVRDVHFVRAENQSRGPEPAAAALISAQASIADVVRSVGRGVAHARVEA.

FMN-binding positions include Ser-9, 15-17 (SVS), 96-99 (MYNF), and 140-143 (SRGG).

The protein belongs to the azoreductase type 1 family. In terms of assembly, homodimer. FMN serves as cofactor.

It catalyses the reaction 2 a quinone + NADH + H(+) = 2 a 1,4-benzosemiquinone + NAD(+). It carries out the reaction N,N-dimethyl-1,4-phenylenediamine + anthranilate + 2 NAD(+) = 2-(4-dimethylaminophenyl)diazenylbenzoate + 2 NADH + 2 H(+). In terms of biological role, quinone reductase that provides resistance to thiol-specific stress caused by electrophilic quinones. Its function is as follows. Also exhibits azoreductase activity. Catalyzes the reductive cleavage of the azo bond in aromatic azo compounds to the corresponding amines. This chain is FMN-dependent NADH:quinone oxidoreductase 2, found in Xanthomonas euvesicatoria pv. vesicatoria (strain 85-10) (Xanthomonas campestris pv. vesicatoria).